Here is a 321-residue protein sequence, read N- to C-terminus: L-carnitine dehydrogenase (321 aa).

14–19 (GSGVIG) serves as a coordination point for NAD(+).

Belongs to the 3-hydroxyacyl-CoA dehydrogenase family. L-carnitine dehydrogenase subfamily. In terms of assembly, homodimer.

The protein resides in the cytoplasm. It catalyses the reaction carnitine + NAD(+) = 3-dehydrocarnitine + NADH + H(+). Its pathway is amine and polyamine metabolism; carnitine metabolism. In terms of biological role, catalyzes the NAD(+)-dependent oxidation of L-carnitine to 3-dehydrocarnitine. The sequence is that of L-carnitine dehydrogenase from Pseudomonas putida (strain ATCC 47054 / DSM 6125 / CFBP 8728 / NCIMB 11950 / KT2440).